The sequence spans 415 residues: MKSILDETIELSSDLISINSVNPTFGGIGEKEKSIYIKNKLEEYNKNYSIKNCEITEYNTVDSEGIERPNIVSKYDFGKNDTLTIISHMDIVPEGDLGLWNSDPFKAEIKDGIIYGRGSEDNHKGIVSSFLLLKMIFEEKIDPKYNLNLIFVADEEDGSKYGLSYLVNNFEDEIFSSKDLIIVPDFGMPEGEFIEIAEKNILWLKFKITGKQCHGSVPENGINADLIAFSFGKGLYDKLYGKYDGINPIFNPAFSTFEPTILKNNIENINTIPGYVELNFDCRIIPKYDPKEVLSDIENYIEVFKNEIEKHILHFDISEKENISITYEILKLEKAEETKKDSEVVKKLGSAIKNVLNKESVLCGMGGGTVAAFLREKGYNTAVWGIGDETAHQPNEHIKIENLIKMAEVYLDILK.

Position 88 (histidine 88) interacts with Zn(2+). The active site involves aspartate 90. Aspartate 121 serves as a coordination point for Zn(2+). Glutamate 155 (proton acceptor) is an active-site residue. Zn(2+) is bound by residues glutamate 156, aspartate 185, and histidine 392.

It belongs to the peptidase M20A family. Requires Zn(2+) as cofactor. Co(2+) is required as a cofactor.

This is an uncharacterized protein from Methanococcus maripaludis (strain DSM 14266 / JCM 13030 / NBRC 101832 / S2 / LL).